A 91-amino-acid chain; its full sequence is MAKRTKKVGIVGKYGTRYGASLRKMAKKLEVAQHSRYTCSFCGKEAMKRKATGIWNCAKCHKVVAGGAYVYGTVTAATVRSTIRRLRDLKE.

Residues 39–60 form a C4-type zinc finger; sequence CSFCGKEAMKRKATGIWNCAKC.

Belongs to the eukaryotic ribosomal protein eL43 family.

This Caenorhabditis elegans protein is Large ribosomal subunit protein eL43.